A 664-amino-acid polypeptide reads, in one-letter code: Methionine--tRNA ligase (664 aa).

Positions 13 to 23 match the 'HIGH' region motif; sequence PYTNGPCHIGH. Zn(2+) contacts are provided by C144, C147, C156, and C160. Positions 327 to 331 match the 'KMSKS' region motif; the sequence is KFSKS. Residue K330 coordinates ATP. A tRNA-binding domain is found at 566 to 664; sequence EFGNLDIRIA…RPVKPGTKIR (99 aa).

It belongs to the class-I aminoacyl-tRNA synthetase family. MetG type 1 subfamily. In terms of assembly, homodimer. The cofactor is Zn(2+).

It localises to the cytoplasm. It carries out the reaction tRNA(Met) + L-methionine + ATP = L-methionyl-tRNA(Met) + AMP + diphosphate. Its function is as follows. Is required not only for elongation of protein synthesis but also for the initiation of all mRNA translation through initiator tRNA(fMet) aminoacylation. The protein is Methionine--tRNA ligase of Methanoculleus marisnigri (strain ATCC 35101 / DSM 1498 / JR1).